The sequence spans 452 residues: Serine carboxypeptidase-like 26 (452 aa).

Residues 1–20 form the signal peptide; that stretch reads MARLLLLFFFFLILLHYASC. N-linked (GlcNAc...) asparagine glycosylation is found at N52 and N138. Disulfide bonds link C87/C338, C244/C256, and C280/C306. S180 is an active-site residue. N327 carries N-linked (GlcNAc...) asparagine glycosylation. Catalysis depends on residues D375 and H427.

Belongs to the peptidase S10 family. As to expression, ubiquitous.

Its subcellular location is the secreted. Probable carboxypeptidase. In Arabidopsis thaliana (Mouse-ear cress), this protein is Serine carboxypeptidase-like 26 (SCPL26).